The primary structure comprises 468 residues: ATP synthase subunit beta (468 aa).

153-160 (GGAGVGKT) serves as a coordination point for ATP.

The protein belongs to the ATPase alpha/beta chains family. F-type ATPases have 2 components, CF(1) - the catalytic core - and CF(0) - the membrane proton channel. CF(1) has five subunits: alpha(3), beta(3), gamma(1), delta(1), epsilon(1). CF(0) has three main subunits: a(1), b(2) and c(9-12). The alpha and beta chains form an alternating ring which encloses part of the gamma chain. CF(1) is attached to CF(0) by a central stalk formed by the gamma and epsilon chains, while a peripheral stalk is formed by the delta and b chains.

It localises to the cell membrane. The catalysed reaction is ATP + H2O + 4 H(+)(in) = ADP + phosphate + 5 H(+)(out). In terms of biological role, produces ATP from ADP in the presence of a proton gradient across the membrane. The catalytic sites are hosted primarily by the beta subunits. In Ligilactobacillus salivarius (strain UCC118) (Lactobacillus salivarius), this protein is ATP synthase subunit beta.